The sequence spans 574 residues: MSFCVNPNCPHPKNPNNVQVCQACGNSLRLNGRYQTLGLLGKGGFGATFAAADVALPGTPICVVKQLRPQTDDPNVFRMAKELFEREAQTLGRVGNHPQVPRLLDYFEDDHQFYLVQEYVKGHNLHQEVKKNGTFTEGSVKQFLTEILPILDYIHSQKVIHRDIKPANLIRRQTDQKLVLIDFGAVKNQIDSVLSSNTSAQTALTAFAVGTAGFAPPEQMAMRPVYASDIYATGVTCLYLLTGKTPKEIDCNSQTGEMDWEKHVTVSSKFAEVIRKMLELSVRHRYKSAQQVLDALEMPTYEDGMMQGMVSTPFTTLTGAGDEPATGIRMGNSSSPDYGDPSTRFNTNVQPRDPSSTSLNTGIKTRTAKPRQSPRDRATSNIESPTTRVRPASNMADGGSVGAGGIDYNMVNPKPFSRREEEKQAIANQPETKRWNGKTFLAEYAQGKRDFADQNLVGIVLAKAFVPGINCYQANLTNANFEQAELTRADFGKARLKNVIFKGANLSDAYFGYADLRGADLRGANLNGVNFKYANLQGANFSGADLGSAKVSPEQLKLAKTNWRTVMPGSGRRR.

Residues 34–301 enclose the Protein kinase domain; the sequence is YQTLGLLGKG…VLDALEMPTY (268 aa). ATP is bound by residues 40–48 and Lys-65; that span reads LGKGGFGAT. Asp-163 serves as the catalytic Proton acceptor. Positions 319-407 are disordered; sequence GAGDEPATGI…GGSVGAGGID (89 aa). The span at 343–364 shows a compositional bias: polar residues; sequence TRFNTNVQPRDPSSTSLNTGIK. 2 Pentapeptide repeat domains span residues 454 to 493 and 504 to 543; these read QNLV…DFGK and ANLS…NFSG.

Belongs to the protein kinase superfamily. Ser/Thr protein kinase family. Post-translationally, autophosphorylated.

It carries out the reaction L-seryl-[protein] + ATP = O-phospho-L-seryl-[protein] + ADP + H(+). It catalyses the reaction L-threonyl-[protein] + ATP = O-phospho-L-threonyl-[protein] + ADP + H(+). Its function is as follows. Protein kinase required for cell motility, but not for phototaxis. The polypeptide is Serine/threonine-protein kinase B (spkB) (Synechocystis sp. (strain ATCC 27184 / PCC 6803 / Kazusa)).